A 179-amino-acid polypeptide reads, in one-letter code: Large ribosomal subunit protein uL6 (179 aa).

It belongs to the universal ribosomal protein uL6 family. As to quaternary structure, part of the 50S ribosomal subunit.

In terms of biological role, this protein binds to the 23S rRNA, and is important in its secondary structure. It is located near the subunit interface in the base of the L7/L12 stalk, and near the tRNA binding site of the peptidyltransferase center. This is Large ribosomal subunit protein uL6 from Mycobacterium ulcerans (strain Agy99).